A 1018-amino-acid polypeptide reads, in one-letter code: Fibronectin-binding protein A (1018 aa).

Residues 1–36 (MKNNLRYGIRKHKLGAASVFLGTMIVVGMGQDKEAA) form the signal peptide. Residues 7–18 (YGIRKHKLGAAS) carry the YSIRK-G/S signaling motif motif. Positions 37 to 511 (ASEQKTTTVE…SNKANGNEKN (475 aa)) are ligand-binding A region. 2 disordered regions span residues 38–61 (SEQK…SETQ) and 78–195 (ATVT…ETGT). 2 stretches are compositionally biased toward polar residues: residues 39–61 (EQKT…SETQ) and 78–92 (ATVT…QVTT). Over residues 112–126 (TVKEEVVKEEAKPQV) the composition is skewed to basic and acidic residues. Polar residues predominate over residues 129-139 (TTQSQDNSGDQ). Positions 194–511 (GTDVTSKVTV…SNKANGNEKN (318 aa)) are fibrinogen/elastin/tropoelastin-binding. Residues 512–872 (GPIIQNNKFE…EGQQTIEEDT (361 aa)) are fibronectin-binding. The B-1 repeat unit spans residues 545–574 (EEYDSSTLDIDYHTAIDGGGGYVDGYIETI). Residues 545–604 (EEYDSSTLDIDYHTAIDGGGGYVDGYIETIEETDSSAIDIDYHTAVDSEAGHVGGYTESS) form a 2 X approximate tandem repeats region. The stretch at 575 to 604 (EETDSSAIDIDYHTAVDSEAGHVGGYTESS) is one B-2 repeat. Disordered regions lie at residues 595–622 (GHVG…NSKH), 740–813 (LGYE…DIDF), and 827–997 (EIIE…GMLF). A D-1 repeat occupies 745 to 782 (GQNSGNQSFEEDTEEDKPKYEQGGNIVDIDFDSVPQIH). The interval 745-878 (GQNSGNQSFE…EEDTTPPIVP (134 aa)) is 4 X approximate tandem repeats, D-3 repeat has more fibronectin-binding activity. A D-2 repeat occupies 783-820 (GQNKGNQSFEEDTEKDKPKYEHGGNIIDIDFDSVPHIH). Residues 821 to 859 (GFNKHTEIIEEDTNKDKPSYQFGGHNSVDFEEDTLPKVS) form a D-3 repeat. The span at 827 to 838 (EIIEEDTNKDKP) shows a compositional bias: basic and acidic residues. A D-4; truncated repeat occupies 860–878 (GQNEGQQTIEEDTTPPIVP). A compositionally biased stretch (pro residues) spans 875-938 (PIVPPTPPTP…PAEPGKPVPP (64 aa)). 5 WR repeats span residues 879–892 (PTPP…EPET), 893–906 (PTPP…EPET), 907–920 (PTPP…EPET), 921–934 (PTPP…EPGK), and 935–948 (PVPP…KPSK). The interval 879 to 948 (PTPPTPEVPS…AKEEPKKPSK (70 aa)) is 5 X tandem repeats, Pro-rich (WR). The short motif at 982-986 (LPETG) is the LPXTG sorting signal element. Thr985 is modified (pentaglycyl murein peptidoglycan amidated threonine). The propeptide at 986–1018 (GGEESTNKGMLFGGLFSILGLALLRRNKKNHKA) is removed by sortase.

Its subcellular location is the secreted. The protein localises to the cell wall. In terms of biological role, possesses multiple, substituting fibronectin (Fn) binding regions, each capable of conferring adherence to both soluble and immobilized forms of Fn. This confers to S.aureus the ability to invade endothelial cells both in vivo and in vitro, without requiring additional factors, although in a slow and inefficient way through actin rearrangements in host cells. This invasion process is mediated by integrin alpha-5/beta-1. Promotes bacterial attachment to both soluble and immobilized forms of fibrinogen (Fg) by means of a unique binding site localized within the 17 C-terminal residues of the gamma-chain of human Fg. Both plasma proteins (Fn and Fg) function as a bridge between bacterium and host cell. Promotes attachment to immobilized elastin peptides in a dose-dependent and saturable manner. Promotes attachment to both full-length and segments of immobilized human tropoelastin at multiple sites in a dose and pH-dependent manner. Promotes adherence to and aggregation of activated platelets independently of other S.aureus surface molecules. Is a critical mediator implicated in the induction of experimental endocarditis in rats with catheter-induced aortic vegetations, promoting both colonization and persistence of the bacterium into the host. This chain is Fibronectin-binding protein A (fnbA), found in Staphylococcus aureus (strain NCTC 8325 / PS 47).